The chain runs to 243 residues: Pyridoxine 5'-phosphate synthase (243 aa).

Position 9 (Asn-9) interacts with 3-amino-2-oxopropyl phosphate. 11–12 is a 1-deoxy-D-xylulose 5-phosphate binding site; the sequence is DH. Residue Arg-20 participates in 3-amino-2-oxopropyl phosphate binding. His-45 (proton acceptor) is an active-site residue. 1-deoxy-D-xylulose 5-phosphate contacts are provided by Arg-47 and His-52. Glu-72 acts as the Proton acceptor in catalysis. Residue Thr-102 participates in 1-deoxy-D-xylulose 5-phosphate binding. The active-site Proton donor is the His-193. 3-amino-2-oxopropyl phosphate is bound by residues Gly-194 and 215 to 216; that span reads GH.

It belongs to the PNP synthase family. In terms of assembly, homooctamer; tetramer of dimers.

The protein resides in the cytoplasm. It catalyses the reaction 3-amino-2-oxopropyl phosphate + 1-deoxy-D-xylulose 5-phosphate = pyridoxine 5'-phosphate + phosphate + 2 H2O + H(+). The protein operates within cofactor biosynthesis; pyridoxine 5'-phosphate biosynthesis; pyridoxine 5'-phosphate from D-erythrose 4-phosphate: step 5/5. Catalyzes the complicated ring closure reaction between the two acyclic compounds 1-deoxy-D-xylulose-5-phosphate (DXP) and 3-amino-2-oxopropyl phosphate (1-amino-acetone-3-phosphate or AAP) to form pyridoxine 5'-phosphate (PNP) and inorganic phosphate. The polypeptide is Pyridoxine 5'-phosphate synthase (Shigella boydii serotype 4 (strain Sb227)).